The sequence spans 1379 residues: DNA-directed RNA polymerase subunit beta'' (1379 aa).

Zn(2+) is bound by residues Cys224, Cys295, Cys302, and Cys305. Residues 503-524 form a disordered region; the sequence is SVQSLSVKRRSTSKLSETNDEA.

This sequence belongs to the RNA polymerase beta' chain family. RpoC2 subfamily. In terms of assembly, in plastids the minimal PEP RNA polymerase catalytic core is composed of four subunits: alpha, beta, beta', and beta''. When a (nuclear-encoded) sigma factor is associated with the core the holoenzyme is formed, which can initiate transcription. The cofactor is Zn(2+).

It localises to the plastid. It carries out the reaction RNA(n) + a ribonucleoside 5'-triphosphate = RNA(n+1) + diphosphate. DNA-dependent RNA polymerase catalyzes the transcription of DNA into RNA using the four ribonucleoside triphosphates as substrates. The sequence is that of DNA-directed RNA polymerase subunit beta'' from Cuscuta exaltata (Tall dodder).